The chain runs to 820 residues: Scavenger receptor class F member 1 (820 aa).

A signal peptide spans 1-23; the sequence is MLAAMGLELVFSLLLLWTQGTQG. At 24 to 422 the chain is on the extracellular side; that stretch reads STLDPAGQHV…TCQLGRHGKN (399 aa). EGF-like domains lie at 56–90, 98–133, 163–193, and 217–251; these read TIPI…AQCS, WGHD…RLCE, RRPC…RRCS, and WGPE…IRCE. Intrachain disulfides connect Cys-60/Cys-72, Cys-66/Cys-78, Cys-80/Cys-89, Cys-102/Cys-114, Cys-108/Cys-121, Cys-123/Cys-132, Cys-166/Cys-174, Cys-168/Cys-181, Cys-183/Cys-192, Cys-221/Cys-232, Cys-225/Cys-239, and Cys-241/Cys-250. N-linked (GlcNAc...) asparagine glycosylation occurs at Asn-291. EGF-like domains are found at residues 304–341 and 353–384; these read FGER…HRCE and CSST…TSCN. A helical membrane pass occupies residues 423–443; that stretch reads ALIVGILVPLLLLLMGIVCCA. The Cytoplasmic portion of the chain corresponds to 444 to 820; sequence YCCSGTRLDP…VVPMSVPPQH (377 aa). Disordered stretches follow at residues 549–685 and 715–820; these read PMAQ…IQES and NYQK…PPQH. A phosphoserine mark is found at Ser-590 and Ser-607. Residues 631-648 show a composition bias toward acidic residues; the sequence is QEAEESTGPEQVNTEEDA. A compositionally biased stretch (polar residues) spans 650-662; sequence TATSSGDPATSHG.

In terms of assembly, heterophilic interaction with SREC2 via its extracellular domain. The heterophilic interaction is suppressed by the presence of ligand such as Ac-LDL. Interacts with AVIL; the interaction occurs in embryonic dorsal root ganglions at 18 dpc and induces neurite-like outgrowth. In terms of tissue distribution, expressed weakly in brain, spinal cord and dorsal root ganglions.

It is found in the membrane. In terms of biological role, mediates the binding and degradation of acetylated low density lipoprotein (Ac-LDL). Mediates heterophilic interactions, suggesting a function as adhesion protein. Plays a role in the regulation of neurite-like outgrowth. This Mus musculus (Mouse) protein is Scavenger receptor class F member 1 (Scarf1).